We begin with the raw amino-acid sequence, 85 residues long: Large ribosomal subunit protein bL27 (85 aa).

The segment at 1–20 is disordered; it reads MAHKKGASSSRNGRDSNAQR. Polar residues predominate over residues 7 to 19; the sequence is ASSSRNGRDSNAQ.

The protein belongs to the bacterial ribosomal protein bL27 family.

This chain is Large ribosomal subunit protein bL27, found in Kineococcus radiotolerans (strain ATCC BAA-149 / DSM 14245 / SRS30216).